Consider the following 571-residue polypeptide: Proline--tRNA ligase (571 aa).

This sequence belongs to the class-II aminoacyl-tRNA synthetase family. ProS type 1 subfamily. In terms of assembly, homodimer.

The protein resides in the cytoplasm. The enzyme catalyses tRNA(Pro) + L-proline + ATP = L-prolyl-tRNA(Pro) + AMP + diphosphate. Its function is as follows. Catalyzes the attachment of proline to tRNA(Pro) in a two-step reaction: proline is first activated by ATP to form Pro-AMP and then transferred to the acceptor end of tRNA(Pro). As ProRS can inadvertently accommodate and process non-cognate amino acids such as alanine and cysteine, to avoid such errors it has two additional distinct editing activities against alanine. One activity is designated as 'pretransfer' editing and involves the tRNA(Pro)-independent hydrolysis of activated Ala-AMP. The other activity is designated 'posttransfer' editing and involves deacylation of mischarged Ala-tRNA(Pro). The misacylated Cys-tRNA(Pro) is not edited by ProRS. The polypeptide is Proline--tRNA ligase (Ectopseudomonas mendocina (strain ymp) (Pseudomonas mendocina)).